The chain runs to 483 residues: Altronate oxidoreductase (483 aa).

18–29 (IIQFGEGNFLRA) contacts NAD(+).

Belongs to the mannitol dehydrogenase family. UxaB subfamily.

It carries out the reaction D-altronate + NAD(+) = keto-D-tagaturonate + NADH + H(+). The protein operates within carbohydrate metabolism; pentose and glucuronate interconversion. This Klebsiella pneumoniae subsp. pneumoniae (strain ATCC 700721 / MGH 78578) protein is Altronate oxidoreductase.